We begin with the raw amino-acid sequence, 280 residues long: Pantothenate synthetase (280 aa).

26–33 (MGNLHEGH) lines the ATP pocket. The active-site Proton donor is the H33. Residue Q57 coordinates (R)-pantoate. Q57 provides a ligand contact to beta-alanine. An ATP-binding site is contributed by 145-148 (GKKD). Q151 is a (R)-pantoate binding site. ATP contacts are provided by residues V174 and 182 to 185 (LSSR).

It belongs to the pantothenate synthetase family. As to quaternary structure, homodimer.

Its subcellular location is the cytoplasm. The enzyme catalyses (R)-pantoate + beta-alanine + ATP = (R)-pantothenate + AMP + diphosphate + H(+). It functions in the pathway cofactor biosynthesis; (R)-pantothenate biosynthesis; (R)-pantothenate from (R)-pantoate and beta-alanine: step 1/1. Catalyzes the condensation of pantoate with beta-alanine in an ATP-dependent reaction via a pantoyl-adenylate intermediate. The polypeptide is Pantothenate synthetase (Bordetella bronchiseptica (strain ATCC BAA-588 / NCTC 13252 / RB50) (Alcaligenes bronchisepticus)).